The following is a 445-amino-acid chain: Xylose isomerase (445 aa).

Residues histidine 107 and aspartate 110 contribute to the active site. Mg(2+) contacts are provided by glutamate 238, glutamate 274, histidine 277, aspartate 302, aspartate 313, aspartate 315, and aspartate 345.

Belongs to the xylose isomerase family. Homotetramer. The cofactor is Mg(2+).

The protein localises to the cytoplasm. It carries out the reaction alpha-D-xylose = alpha-D-xylulofuranose. In Bacillus cereus (strain ATCC 10987 / NRS 248), this protein is Xylose isomerase.